Consider the following 299-residue polypeptide: Acetylglutamate kinase (299 aa).

Residues 66-67 (GG), Arg-88, and Asn-196 contribute to the substrate site.

It belongs to the acetylglutamate kinase family. ArgB subfamily.

The protein localises to the cytoplasm. The enzyme catalyses N-acetyl-L-glutamate + ATP = N-acetyl-L-glutamyl 5-phosphate + ADP. It participates in amino-acid biosynthesis; L-arginine biosynthesis; N(2)-acetyl-L-ornithine from L-glutamate: step 2/4. Functionally, catalyzes the ATP-dependent phosphorylation of N-acetyl-L-glutamate. The polypeptide is Acetylglutamate kinase (Alcanivorax borkumensis (strain ATCC 700651 / DSM 11573 / NCIMB 13689 / SK2)).